A 269-amino-acid polypeptide reads, in one-letter code: Ribosomal RNA small subunit methyltransferase A (269 aa).

6 residues coordinate S-adenosyl-L-methionine: N11, L13, G37, E57, D85, and N104.

This sequence belongs to the class I-like SAM-binding methyltransferase superfamily. rRNA adenine N(6)-methyltransferase family. RsmA subfamily.

The protein localises to the cytoplasm. It catalyses the reaction adenosine(1518)/adenosine(1519) in 16S rRNA + 4 S-adenosyl-L-methionine = N(6)-dimethyladenosine(1518)/N(6)-dimethyladenosine(1519) in 16S rRNA + 4 S-adenosyl-L-homocysteine + 4 H(+). Specifically dimethylates two adjacent adenosines (A1518 and A1519) in the loop of a conserved hairpin near the 3'-end of 16S rRNA in the 30S particle. May play a critical role in biogenesis of 30S subunits. In Campylobacter hominis (strain ATCC BAA-381 / DSM 21671 / CCUG 45161 / LMG 19568 / NCTC 13146 / CH001A), this protein is Ribosomal RNA small subunit methyltransferase A.